The chain runs to 70 residues: Cold shock-like protein CspG (70 aa).

A CSD domain is found at 7 to 67 (GLVKWFNEEK…GQKGLQAANV (61 aa)).

The protein resides in the cytoplasm. This is Cold shock-like protein CspG (cspG) from Shewanella violacea (strain JCM 10179 / CIP 106290 / LMG 19151 / DSS12).